Consider the following 156-residue polypeptide: 2-C-methyl-D-erythritol 2,4-cyclodiphosphate synthase (156 aa).

2 residues coordinate a divalent metal cation: Asp-10 and His-12. 4-CDP-2-C-methyl-D-erythritol 2-phosphate contacts are provided by residues 10-12 (DSH) and 36-37 (HS). Position 44 (His-44) interacts with a divalent metal cation. Residues 58–60 (DIG) and 63–67 (FKDTD) contribute to the 4-CDP-2-C-methyl-D-erythritol 2-phosphate site.

It belongs to the IspF family. Homotrimer. A divalent metal cation is required as a cofactor.

The catalysed reaction is 4-CDP-2-C-methyl-D-erythritol 2-phosphate = 2-C-methyl-D-erythritol 2,4-cyclic diphosphate + CMP. It functions in the pathway isoprenoid biosynthesis; isopentenyl diphosphate biosynthesis via DXP pathway; isopentenyl diphosphate from 1-deoxy-D-xylulose 5-phosphate: step 4/6. In terms of biological role, involved in the biosynthesis of isopentenyl diphosphate (IPP) and dimethylallyl diphosphate (DMAPP), two major building blocks of isoprenoid compounds. Catalyzes the conversion of 4-diphosphocytidyl-2-C-methyl-D-erythritol 2-phosphate (CDP-ME2P) to 2-C-methyl-D-erythritol 2,4-cyclodiphosphate (ME-CPP) with a corresponding release of cytidine 5-monophosphate (CMP). In Aquifex aeolicus (strain VF5), this protein is 2-C-methyl-D-erythritol 2,4-cyclodiphosphate synthase.